Consider the following 179-residue polypeptide: Tetratricopeptide repeat protein 36 (179 aa).

3 TPR repeats span residues 43–76 (SSQL…CPLN), 77–110 (PSAY…AGPK), and 115–148 (CQAY…GSSF).

Belongs to the TTC36 family.

This Caenorhabditis briggsae protein is Tetratricopeptide repeat protein 36.